Consider the following 177-residue polypeptide: MSRVAKAPVAIPAGVEVKLNGQEITVKGAKGELTRVLNDAVVIAQEENNLTFGPKEGVANAWAQAGTARALVNNMVVGVTEGFTKKLTLKGVGYRAAIKGNAVGLTLGFSHPVEHELPAGIKAECPSQTEIVITGCDKQLVGQVAADIRSYRQPEPYKGKGVRYADENVRTKEAKKK.

Belongs to the universal ribosomal protein uL6 family. In terms of assembly, part of the 50S ribosomal subunit.

Functionally, this protein binds to the 23S rRNA, and is important in its secondary structure. It is located near the subunit interface in the base of the L7/L12 stalk, and near the tRNA binding site of the peptidyltransferase center. This Vibrio parahaemolyticus serotype O3:K6 (strain RIMD 2210633) protein is Large ribosomal subunit protein uL6.